The primary structure comprises 75 residues: Putative sulfur carrier protein MJ0990 (75 aa).

Cys15 serves as the catalytic Cysteine persulfide intermediate.

It belongs to the sulfur carrier protein TusA family.

In Methanocaldococcus jannaschii (strain ATCC 43067 / DSM 2661 / JAL-1 / JCM 10045 / NBRC 100440) (Methanococcus jannaschii), this protein is Putative sulfur carrier protein MJ0990.